A 151-amino-acid polypeptide reads, in one-letter code: Large-conductance mechanosensitive channel (151 aa).

2 consecutive transmembrane segments (helical) span residues 12-32 (GNIV…ALVT) and 71-91 (VLLS…FLVV). Positions 122–151 (AQTNGDSPGRHGGRGTPSPTDGPLASTESQ) are disordered.

The protein belongs to the MscL family. As to quaternary structure, homopentamer.

It localises to the cell membrane. Functionally, channel that opens in response to stretch forces in the membrane lipid bilayer. May participate in the regulation of osmotic pressure changes within the cell. The sequence is that of Large-conductance mechanosensitive channel from Mycobacterium bovis (strain BCG / Pasteur 1173P2).